The primary structure comprises 410 residues: MAETMKDITMKNDESQEEEIPDQFLCCVCLELLYKPIVLSCGHLSCFWCVHKSMNGFRESHCPICRDPYVHFPSVCQKLYFLLKKMYPLAHKKREEQVLKEEQERECFSPQIDLVLDLSVCSGDSLNVSDKQKVEECSNAANLLSSSSSRGDIPCIPKNQEPTDAKALNVHENELLKDNKVSKQISKDDLLCSACKELLVRPVVLNCGHVYCEGCVVDMAEESEKIKCQECNVCDPRGFPKVCLILEQLLEENFPEEYNSRSSKVQKTLAHNSKGNIQSYLKEGPSLSNDNNNDDPWLANPGSNVHFGAGCDSCGVYPIIGDRYRCKDCKEEIGYDLCKDCYETPSKVPGRFNQQHTPDHRLELARSPQVLINFNSIGILLGPVISNEGMDTDEGEEGPPGSSNESSSTE.

2 consecutive RING-type zinc fingers follow at residues 26–66 (CCVC…PICR) and 192–232 (CSAC…QECN). A ZZ-type zinc finger spans residues 306 to 370 (HFGAGCDSCG…RLELARSPQV (65 aa)). 8 residues coordinate Zn(2+): Cys311, Cys314, Cys326, Cys329, Cys338, Cys341, His356, and His360. Positions 385–410 (ISNEGMDTDEGEEGPPGSSNESSSTE) are disordered. Residues 399–410 (PPGSSNESSSTE) are compositionally biased toward low complexity.

Its subcellular location is the cytoplasm. It catalyses the reaction S-ubiquitinyl-[E2 ubiquitin-conjugating enzyme]-L-cysteine + [acceptor protein]-L-lysine = [E2 ubiquitin-conjugating enzyme]-L-cysteine + N(6)-ubiquitinyl-[acceptor protein]-L-lysine.. It participates in protein modification; protein ubiquitination. Functionally, E3 ubiquitin-protein ligase that mediates ubiquitination and subsequent proteasomal degradation of target proteins. Functions in the N-end rule pathway of protein degradation, where it specifically recognizes and ubiquitinates proteins with a N-terminal bulky aromatic amino acid (Phe). Does not act on aliphatic hydrophobic and basic N-terminal residues (Arg or Leu) containing proteins. The polypeptide is E3 ubiquitin-protein ligase PRT1 (PRT1) (Arabidopsis thaliana (Mouse-ear cress)).